The following is a 135-amino-acid chain: Protein NrdI (135 aa).

The protein belongs to the NrdI family.

Its function is as follows. Probably involved in ribonucleotide reductase function. The sequence is that of Protein NrdI from Rhizobium johnstonii (strain DSM 114642 / LMG 32736 / 3841) (Rhizobium leguminosarum bv. viciae).